A 954-amino-acid chain; its full sequence is MTELLHSLSTQNEFVARHNGPDKQEQATMLKTVNAESLDALIAQTVPAQIRLEAPMQLAPAQSEADMLATMKSFAKLNQLKRTFIGQGYYNTFTPNVILRNVMENPGWYTAYTPYQPEISQGRLESLLNYQQMVMDLTAMEIANASLLDEATAAAEAMALCQRAGKSKSNLFFVADDVHPQTIEVVKTRAAFLGFEVKVDSIDNITQQEAFGALLQYPGTTGEVRDLTDIIAKAQANKTLVTVATDLLASVLLKPAGEMGADVVIGSAQRFGVPMGYGGPHAAFMATRDAHKRTMPGRVIGVSIDAKGNQALRMAMQTREQHIRREKATSNICTAQALLANMAAFYAVYHGPQGLRTIARRAHHLTAILAAGLTKAGYELAHQHFFDTLAINTGAKTDALYQAAQQANINLRKLPNQLGVSFDETTTVADVEALFAIFGIKEEVHALSDRIATNELAAIPESCRRQSAFLTHPVFNTHHSETQMLRYMKHLENKDFSLTHGMIPLGSCTMKLNATAEMIPVTWPEFGALHPFVPKAQAAGYAALAEDLKQKLCEITGYDAFSLQPNSGASGEYAGLVAIQRYHQSRGEGHRNVCLIPSSAHGTNPATAAMVSMKVVVVKCDENGNIDMVDLADKIEKHKDHLSSIMITYPSTHGVYEQQVREVCEMVHAAGGQVYLDGANMNAQVGLTSPGFIGSDVSHLNLHKTFCIPHGGGGPGMGPIGVKSHLAPFLPGHIEGGVEGSDFAVSAADLGSASILPISWAYIAMMGADGLAEATKLAILNANYVMERLRPHYPILYRGANGRVAHECIIDIRPLKEETGISEEDIAKRLMDYGFHAPTMSFPVAGTLMVEPTESEDLAELDRFCDALIAIRGEIDKVKNGEWPLESNPLVHAPHTQADLREEKWDRPYSREIACFPSAHTKASKYWPTVNRVDNVYGDRNLVCSCPSIDSYQD.

Lys704 carries the post-translational modification N6-(pyridoxal phosphate)lysine.

The protein belongs to the GcvP family. As to quaternary structure, the glycine cleavage system is composed of four proteins: P, T, L and H. It depends on pyridoxal 5'-phosphate as a cofactor.

The catalysed reaction is N(6)-[(R)-lipoyl]-L-lysyl-[glycine-cleavage complex H protein] + glycine + H(+) = N(6)-[(R)-S(8)-aminomethyldihydrolipoyl]-L-lysyl-[glycine-cleavage complex H protein] + CO2. The glycine cleavage system catalyzes the degradation of glycine. The P protein binds the alpha-amino group of glycine through its pyridoxal phosphate cofactor; CO(2) is released and the remaining methylamine moiety is then transferred to the lipoamide cofactor of the H protein. The sequence is that of Glycine dehydrogenase (decarboxylating) from Vibrio cholerae serotype O1 (strain ATCC 39541 / Classical Ogawa 395 / O395).